The chain runs to 531 residues: Acid-sensing ion channel 3 (531 aa).

Residues 1–43 are Cytoplasmic-facing; sequence MKPTSGPEEARRPASDIRVFASNCSMHGLGHVFGPGSLSLRRG. Residues 44–61 form a helical membrane-spanning segment; the sequence is MWAAAVVLSVATFLYQVA. Over 62–441 the chain is Extracellular; sequence ERVRYYREFH…SELLGDIGGQ (380 aa). 7 disulfide bridges follow: Cys92–Cys186, Cys164–Cys171, Cys282–Cys370, Cys315–Cys366, Cys319–Cys364, Cys328–Cys350, and Cys330–Cys342. The N-linked (GlcNAc...) asparagine glycan is linked to Asn175. Residues 285–307 are disordered; sequence ASLNPNYEPEPSDPLGSPSPSPS. Asn398 carries N-linked (GlcNAc...) asparagine glycosylation. Residues 442–460 form a helical membrane-spanning segment; that stretch reads MGLFIGASLLTILEILDYL. A GAS motif; ion selectivity filter motif is present at residues 447-449; it reads GAS. Topologically, residues 461-531 are cytoplasmic; sequence CEVFRDKVLG…HRTCYLVTQL (71 aa). A PDZ-binding motif is present at residues 528–531; sequence VTQL.

The protein belongs to the amiloride-sensitive sodium channel (TC 1.A.6) family. ASIC3 subfamily. Can form homotrimeric channels. Heterotrimer; forms functional heterotrimers producing channel with different properties. Forms heterotrimers with ASIC2; gives rise to a biphasic current with a sustained current which discriminates poorly between Na(+) and K(+). Interacts with STOM; inhibits ASIC3 acid-evoked current. Interacts with LIN7B (via PDZ domain); increases ASIC3 expression at the plasma membrane. Interacts with MAGI1 (via PDZ domain); probably regulates ASIC3. Interacts with GOPC (via PDZ domain); probably regulates ASIC3. Interacts with DLG4 (via PDZ domain); reduces ASIC3 expression at the plasma membrane. In terms of tissue distribution, expressed by sensory neurons. Strongly expressed in brain, spinal cord, lung, lymph nodes, kidney, pituitary, heart and testis.

It localises to the cell membrane. The protein localises to the cytoplasm. It carries out the reaction Na(+)(in) = Na(+)(out). It catalyses the reaction K(+)(in) = K(+)(out). The enzyme catalyses Ca(2+)(in) = Ca(2+)(out). Inhibited by the diuretic drug amiloride. Inhibited by the diuretic drug triamterene. Potentiated by the vertebrate neuropeptide FF (NPFF) and the related FMRFamide. Specifically and reversibly inhibited by the a sea anemone toxin APETx2. In terms of biological role, forms pH-gated heterotrimeric sodium channels that act as postsynaptic excitatory receptors in the nervous system. Upon extracellular acidification, these channels generate a biphasic current with a fast inactivating and a slow sustained phase. ASIC3 is more sensitive to protons and gates between closed, open, and desensitized states faster than other ASICs. Displays high selectivity for sodium ions but can also permit the permeation of other cations. As a neuronal acid sensor, probably contributes to mechanoreception, acid nociception, and heat nociception. By forming heterotrimeric channels with ASIC2, generates a biphasic current with a fast inactivating and a slow sustained phase, which in sensory neurons is proposed to mediate the pain induced by acidosis that occurs in ischemic, damaged or inflamed tissues. This chain is Acid-sensing ion channel 3, found in Homo sapiens (Human).